The sequence spans 194 residues: Cytochrome b-245 light chain (194 aa).

Topologically, residues Gly2–Ala7 are cytoplasmic. The chain crosses the membrane as a helical span at residues Met8 to Ala30. The Extracellular portion of the chain corresponds to Gly31 to Gln35. The helical transmembrane segment at Trp36 to Glu53 threads the bilayer. The Cytoplasmic portion of the chain corresponds to Tyr54–Gly69. Residues Gln70–Leu80 lie within the membrane without spanning it. Over Gly81–Asn86 the chain is Cytoplasmic. The helical transmembrane segment at Tyr87–Leu104 threads the bilayer. Residue Leu105 is a topological domain, extracellular. Residues Ala106 to Val126 traverse the membrane as a helical segment. The Cytoplasmic segment spans residues Arg127–Val194. A disordered region spans residues Ile134–Val194. The residue at position 147 (Thr147) is a Phosphothreonine. Lys149 is covalently cross-linked (Glycyl lysine isopeptide (Lys-Gly) (interchain with G-Cter in ubiquitin)).

This sequence belongs to the p22phox family. As to quaternary structure, component of the phagocyte NADPH oxidase core complex/cytochrome b558 complex, composed of CYBB (heavy chain (beta)) and CYBA (light chain (alpha)). Component of the phagocyte NADPH oxidase complex composed of an obligatory core heterodimer formed by the membrane proteins CYBA and CYBB and the cytosolic regulatory subunits NCF1/p47-phox, NCF2/p67-phox, NCF4/p40-phox and the small GTPase RAC1 or RAC2. Interacts with NCF1 (via SH3 domain). Interacts with SH3PXD2A. Interacts with DUOX1, DUOX2 and TPO. Interacts with NOX4; this interaction mediates superoxide generation. Interacts with calprotectin (S100A8/9). Interacts with GBP7. Interacts with NOXO1. Forms a heterodimer with NOX3 and is essential for activity and cell membrane localization of NOX3. Interacts with NOX1. Phosphorylation at Thr-147 enhances NADPH oxidase activity by promoting NCF1/p47-phox binding. In terms of processing, ubiquitinated at Lys-149 likely by RNF145.

It localises to the cell membrane. Its function is as follows. Subunit of NADPH oxidase complexes that is required for the NADPH oxidase activity that generates, in various cell types, superoxide from molecular oxygen utilizing NADPH as an electron donor. Subunit of the phagocyte NADPH oxidase complex that mediates the transfer of electrons from cytosolic NADPH to O2 to produce the superoxide anion (O2(-)). In the activated complex, electrons are first transferred from NADPH to flavin adenine dinucleotide (FAD) and subsequently transferred via two heme molecules to molecular oxygen, producing superoxide through an outer-sphere reaction. Activation of the NADPH oxidase complex is initiated by the assembly of cytosolic subunits of the NADPH oxidase complex with the core NADPH oxidase complex to form a complex at the plasma membrane or phagosomal membrane. This activation process is initiated by phosphorylation dependent binding of the cytosolic NCF1/p47-phox subunit to the C-terminus of CYBA/p22-phox. Aassociates with NOX3 to form a functional NADPH oxidase constitutively generating superoxide. This Oryctolagus cuniculus (Rabbit) protein is Cytochrome b-245 light chain.